The primary structure comprises 344 residues: 1-acyl-sn-glycerol-3-phosphate acyltransferase BAT2, chloroplastic (344 aa).

Residues 1–49 (MDVASAPGVSSHPPYYSKPICSSQSSLIRIPINKGCCFARSSNLITSLH) constitute a chloroplast transit peptide. The chain crosses the membrane as a helical span at residues 113–133 (GICFCLVAGVSAIVLIVLMIT). Positions 188-193 (HQSFLD) match the HXXXXD motif motif. A helical transmembrane segment spans residues 210 to 230 (TGIFVIPVIGWAMSMMGVVPL).

Belongs to the 1-acyl-sn-glycerol-3-phosphate acyltransferase family. As to expression, widely expressed.

It is found in the plastid. It localises to the chloroplast membrane. It catalyses the reaction a fatty acyl-[ACP] + a 1-acyl-sn-glycero-3-phosphate = a 1,2-diacyl-sn-glycero-3-phosphate + holo-[ACP]. The catalysed reaction is a 1-acyl-sn-glycero-3-phosphate + an acyl-CoA = a 1,2-diacyl-sn-glycero-3-phosphate + CoA. It functions in the pathway phospholipid metabolism; CDP-diacylglycerol biosynthesis; CDP-diacylglycerol from sn-glycerol 3-phosphate: step 2/3. In terms of biological role, plastidial enzyme of the prokaryotic glycerol-3-phosphate pathway that converts lysophosphatidic acid (LPA) into phosphatidic acid by incorporating an acyl moiety at position sn-2. Utilizes palmitoyl-ACP (16:0-ACP) to produce phosphatidic acid containing a saturated group at position sn-2, which is characteristic of lipids synthesized by the prokaryotic pathway. In vitro, can use 16:0-CoA as acyl donor. The chain is 1-acyl-sn-glycerol-3-phosphate acyltransferase BAT2, chloroplastic from Brassica napus (Rape).